Reading from the N-terminus, the 40-residue chain is Photosystem II reaction center protein J (40 aa).

Residues 8–28 form a helical membrane-spanning segment; it reads IPLWIIGTVAGIPVIGLIGIF.

This sequence belongs to the PsbJ family. As to quaternary structure, PSII is composed of 1 copy each of membrane proteins PsbA, PsbB, PsbC, PsbD, PsbE, PsbF, PsbH, PsbI, PsbJ, PsbK, PsbL, PsbM, PsbT, PsbX, PsbY, PsbZ, Psb30/Ycf12, at least 3 peripheral proteins of the oxygen-evolving complex and a large number of cofactors. It forms dimeric complexes.

The protein resides in the plastid. Its subcellular location is the chloroplast thylakoid membrane. One of the components of the core complex of photosystem II (PSII). PSII is a light-driven water:plastoquinone oxidoreductase that uses light energy to abstract electrons from H(2)O, generating O(2) and a proton gradient subsequently used for ATP formation. It consists of a core antenna complex that captures photons, and an electron transfer chain that converts photonic excitation into a charge separation. The polypeptide is Photosystem II reaction center protein J (Pelargonium hortorum (Common geranium)).